Here is a 350-residue protein sequence, read N- to C-terminus: S-adenosylmethionine:tRNA ribosyltransferase-isomerase (350 aa).

It belongs to the QueA family. As to quaternary structure, monomer.

The protein resides in the cytoplasm. The catalysed reaction is 7-aminomethyl-7-carbaguanosine(34) in tRNA + S-adenosyl-L-methionine = epoxyqueuosine(34) in tRNA + adenine + L-methionine + 2 H(+). The protein operates within tRNA modification; tRNA-queuosine biosynthesis. Its function is as follows. Transfers and isomerizes the ribose moiety from AdoMet to the 7-aminomethyl group of 7-deazaguanine (preQ1-tRNA) to give epoxyqueuosine (oQ-tRNA). In Bacillus thuringiensis subsp. konkukian (strain 97-27), this protein is S-adenosylmethionine:tRNA ribosyltransferase-isomerase.